Consider the following 102-residue polypeptide: Large ribosomal subunit protein uL24c (102 aa).

It belongs to the universal ribosomal protein uL24 family. As to quaternary structure, part of the 50S ribosomal subunit.

Its subcellular location is the plastid. The protein localises to the chloroplast. One of two assembly initiator proteins, it binds directly to the 5'-end of the 23S rRNA, where it nucleates assembly of the 50S subunit. In Rhodomonas salina (Cryptomonas salina), this protein is Large ribosomal subunit protein uL24c (rpl24).